The sequence spans 295 residues: 4-hydroxy-tetrahydrodipicolinate synthase (295 aa).

Residue Thr-47 coordinates pyruvate. Tyr-135 functions as the Proton donor/acceptor in the catalytic mechanism. Lys-163 acts as the Schiff-base intermediate with substrate in catalysis. Ile-206 contacts pyruvate.

It belongs to the DapA family. As to quaternary structure, homodimer.

It localises to the cytoplasm. It catalyses the reaction L-aspartate 4-semialdehyde + pyruvate = (2S,4S)-4-hydroxy-2,3,4,5-tetrahydrodipicolinate + H2O + H(+). The protein operates within amino-acid biosynthesis; L-lysine biosynthesis via DAP pathway; (S)-tetrahydrodipicolinate from L-aspartate: step 3/4. In terms of biological role, catalyzes the condensation of (S)-aspartate-beta-semialdehyde [(S)-ASA] and pyruvate to 4-hydroxy-tetrahydrodipicolinate (HTPA). The polypeptide is 4-hydroxy-tetrahydrodipicolinate synthase (Staphylococcus aureus (strain bovine RF122 / ET3-1)).